The following is a 1285-amino-acid chain: Transmembrane channel-like protein 1 (1285 aa).

Residues 1 to 29 form a disordered region; sequence MQEAARRASLRKEHTPTNEKFGDLSKQDS. Residues 1 to 164 lie on the Cytoplasmic side of the membrane; the sequence is MQEAARRASL…KIKRIESHFG (164 aa). A helical transmembrane segment spans residues 165-202; it reads SVVSSYFTFLRWIVFVNIMITLIALVFVVLPETLADSV. At 203-260 the chain is on the extracellular side; that stretch reads ANEGRFNRTKTRKQIPANERVHADELAVVWHYDGYLRYSPLFYGYYSDDPFLGNKIKY. Asn209 carries an N-linked (GalNAc...) asparagine glycan. Residues 261-292 form a helical membrane-spanning segment; the sequence is ALPLAYFMVTLTIFAYSFFAILRKMAANARMS. The Cytoplasmic portion of the chain corresponds to 293–349; it reads KLSGSKAEQYIFNWKLFTGWDYTIGNSETASNTVMAVVIKLRESIADIKKDAHGKFR. Residues 350–381 traverse the membrane as a helical segment; that stretch reads LLQFSLRVFANIIICAMLGFSIYCIIFAVQKS. The Extracellular segment spans residues 382-388; that stretch reads QVQDDGN. A helical transmembrane segment spans residues 389–416; it reads LFTKNQVPSVVSTITHVFPMIFDLIGKM. The Cytoplasmic portion of the chain corresponds to 417-420; the sequence is ENYH. A helical transmembrane segment spans residues 421-455; that stretch reads PRTALRAHLGRVLILYTVNYITLIFALFEKMTALR. Topologically, residues 456–667 are extracellular; it reads DRVNSTSTSS…NHDGHNNDIC (212 aa). The disordered stretch occupies residues 458-488; that stretch reads VNSTSTSSSHRTKRQQGGWNPNMQRPPPYAS. Cysteines 667 and 816 form a disulfide. The chain crosses the membrane as a helical span at residues 668 to 705; the sequence is WETIIGQEIVKLVTMDLIFTILSILVIDLFRGLWIKYC. Residues 696 to 720 form a required for interaction with tmie region; the sequence is LFRGLWIKYCSSWWCWDIETTFPEY. The Cytoplasmic portion of the chain corresponds to 706–724; the sequence is SSWWCWDIETTFPEYGEFK. The chain crosses the membrane as a helical span at residues 725-745; sequence VAENVLHIINNQGMIWLGLFF. Topologically, residues 746 to 748 are extracellular; sequence APL. A helical transmembrane segment spans residues 749–771; sequence LPAINNIKLIILMYIRGWAVMTC. The required for interaction with tmie stretch occupies residues 766–773; sequence WAVMTCNV. At 772–785 the chain is on the cytoplasmic side; the sequence is NVPAREIFRASRSS. Residues 786 to 809 traverse the membrane as a helical segment; sequence NFYLGILLIWLLLCTLPVGFVIAS. The Extracellular portion of the chain corresponds to 810–852; that stretch reads MSPSRSCGPFARYQHFYTVVTREIEKRVDQTVLSYIRHIASPG. The helical transmembrane segment at 853–886 threads the bilayer; that stretch reads VVIPIILFLILIIYFLFSLVRGLREANTDLQAQL. The Cytoplasmic segment spans residues 887–1285; that stretch reads VHERTEEKKK…DEDDSPRQID (399 aa). 2 disordered regions span residues 940–962 and 1114–1285; these read ADHA…DDER and TIKE…RQID. The span at 948–961 shows a compositional bias: acidic residues; it reads SSEESDINEDEDDE. Composition is skewed to basic and acidic residues over residues 1121-1131, 1146-1156, and 1167-1182; these read DPGKSDKKQTS, DEARALREKMK, and TVEE…ESEF. The span at 1197-1208 shows a compositional bias: acidic residues; sequence TEEENEEEETDS.

It belongs to the TMC family. In terms of assembly, homodimer. Interacts with calm-1 and tmie to form the MET channel. As to expression, expressed in the ASH polymodal avoidance neurons. Also expressed in other sensory neurons, including the ADF, ASE, ADL, AQR, PQR, URX and PHA cells.

The protein resides in the cell membrane. The catalysed reaction is Na(+)(in) = Na(+)(out). It carries out the reaction Ca(2+)(in) = Ca(2+)(out). It catalyses the reaction K(+)(in) = K(+)(out). Pore-forming subunit of the mechanotransducer (MET) non-selective cation channel complex. The MET complex is composed of symmetric dimeric MET channels, each channel comprising two copies of pore-forming ion-conducting transmembrane TMC subunits and auxiliary proteins including the transmembrane inner ear protein/tmie, the calcium-binding protein/calm-1 and arrestin domain protein arrd-6. Sodium ions are the most permeable, whereas calcium and potassium have lower indices. Sodium-sensor ion channel that acts specifically in salt taste chemosensation. Required for salt-evoked neuronal activity and behavioral avoidance of high concentrations of NaCl. The polypeptide is Transmembrane channel-like protein 1 (tmc-1) (Caenorhabditis elegans).